The following is a 586-amino-acid chain: Phosphatidylinositol-3-phosphatase SAC1-B (586 aa).

At M1–K519 the chain is on the cytoplasmic side. Positions L121–G450 constitute an SAC domain. Residues T451–D586 form an essential for phosphatidylinositol-4-phosphate phosphatase activity region. The helical transmembrane segment at F520–M540 threads the bilayer. The Lumenal segment spans residues A541 to E547. The helical transmembrane segment at T548–F568 threads the bilayer. Residues N569–D586 are Cytoplasmic-facing.

It is found in the endoplasmic reticulum membrane. The protein localises to the golgi apparatus membrane. The catalysed reaction is a 1,2-diacyl-sn-glycero-3-phospho-(1D-myo-inositol-3-phosphate) + H2O = a 1,2-diacyl-sn-glycero-3-phospho-(1D-myo-inositol) + phosphate. It catalyses the reaction a 1,2-diacyl-sn-glycero-3-phospho-(1D-myo-inositol 4-phosphate) + H2O = a 1,2-diacyl-sn-glycero-3-phospho-(1D-myo-inositol) + phosphate. Its function is as follows. Phosphoinositide phosphatase which catalyzes the hydrolysis of phosphatidylinositol 4-phosphate (PtdIns(4)P), phosphatidylinositol 3-phosphate (PtdIns(3)P) and has low activity towards phosphatidylinositol-3,5-bisphosphate (PtdIns(3,5)P2). In Danio rerio (Zebrafish), this protein is Phosphatidylinositol-3-phosphatase SAC1-B (sacm1lb).